The sequence spans 77 residues: uncharacterized protein (77 aa).

It localises to the plastid. Its subcellular location is the cyanelle. This is an uncharacterized protein from Cyanophora paradoxa.